The chain runs to 437 residues: Trigger factor (437 aa).

The PPIase FKBP-type domain maps to 164-249 (GDFAKFDFEG…LHEIQCKKIG (86 aa)).

It belongs to the FKBP-type PPIase family. Tig subfamily.

It localises to the cytoplasm. The catalysed reaction is [protein]-peptidylproline (omega=180) = [protein]-peptidylproline (omega=0). In terms of biological role, involved in protein export. Acts as a chaperone by maintaining the newly synthesized protein in an open conformation. Functions as a peptidyl-prolyl cis-trans isomerase. This chain is Trigger factor, found in Campylobacter hominis (strain ATCC BAA-381 / DSM 21671 / CCUG 45161 / LMG 19568 / NCTC 13146 / CH001A).